Here is a 55-residue protein sequence, read N- to C-terminus: Spermatid nuclear transition protein 1 (55 aa).

Residues 1–42 (MSTSRKLKSQGTRRGKNRTPHKGVKRGCSKRKYRKSSLKSRK) show a composition bias toward basic residues. The segment at 1-55 (MSTSRKLKSQGTRRGKNRTPHKGVKRGCSKRKYRKSSLKSRKRCDDANRNFRSHL) is disordered. 4 positions are modified to phosphoserine: S9, S36, S37, and S40.

It belongs to the nuclear transition protein 1 family. In terms of tissue distribution, testis.

Its subcellular location is the nucleus. It is found in the chromosome. In terms of biological role, plays a key role in the replacement of histones to protamine in the elongating spermatids of mammals. In condensing spermatids, loaded onto the nucleosomes, where it promotes the recruitment and processing of protamines, which are responsible for histone eviction. The protein is Spermatid nuclear transition protein 1 (TNP1) of Ovis aries (Sheep).